We begin with the raw amino-acid sequence, 138 residues long: Phosphoribosyl-AMP cyclohydrolase (138 aa).

Residue Asp92 coordinates Mg(2+). Cys93 contributes to the Zn(2+) binding site. 2 residues coordinate Mg(2+): Asp94 and Asp96. The Zn(2+) site is built by Cys109 and Cys116.

This sequence belongs to the PRA-CH family. Homodimer. Requires Mg(2+) as cofactor. The cofactor is Zn(2+).

It localises to the cytoplasm. The catalysed reaction is 1-(5-phospho-beta-D-ribosyl)-5'-AMP + H2O = 1-(5-phospho-beta-D-ribosyl)-5-[(5-phospho-beta-D-ribosylamino)methylideneamino]imidazole-4-carboxamide. It functions in the pathway amino-acid biosynthesis; L-histidine biosynthesis; L-histidine from 5-phospho-alpha-D-ribose 1-diphosphate: step 3/9. Functionally, catalyzes the hydrolysis of the adenine ring of phosphoribosyl-AMP. This is Phosphoribosyl-AMP cyclohydrolase from Clavibacter sepedonicus (Clavibacter michiganensis subsp. sepedonicus).